A 286-amino-acid polypeptide reads, in one-letter code: MLDKLFVLSQYVTPQLAVSRLAGRLADSESTPALKNRVIKWFIGRYGVNMSEAAEPDFTAYPTFNAFFTRALKPGARTIDPAPETLTSPVDGAISQIGQISTDRVFQAKGQSFSLTELLGGDDERAEPFREGEFATIYLSPKDYHRIHMPMAGTLKEMVYVPGKLFSVNPVTAENVPNLFARNERVACLFDTEAGPMAMVLVGAMIVGSVETTWAGVVAPNSGKVTQWQYRGDDAVQFEKGQEMGRFRLGSTVVLVMPKGAVKWQPNQVAEKTVQLGEAFGKLNVK.

Active-site charge relay system; for autoendoproteolytic cleavage activity residues include aspartate 91, histidine 148, and serine 251. Serine 251 (schiff-base intermediate with substrate; via pyruvic acid; for decarboxylase activity) is an active-site residue. Position 251 is a pyruvic acid (Ser); by autocatalysis (serine 251).

It belongs to the phosphatidylserine decarboxylase family. PSD-B subfamily. Prokaryotic type I sub-subfamily. As to quaternary structure, heterodimer of a large membrane-associated beta subunit and a small pyruvoyl-containing alpha subunit. Pyruvate is required as a cofactor. Is synthesized initially as an inactive proenzyme. Formation of the active enzyme involves a self-maturation process in which the active site pyruvoyl group is generated from an internal serine residue via an autocatalytic post-translational modification. Two non-identical subunits are generated from the proenzyme in this reaction, and the pyruvate is formed at the N-terminus of the alpha chain, which is derived from the carboxyl end of the proenzyme. The autoendoproteolytic cleavage occurs by a canonical serine protease mechanism, in which the side chain hydroxyl group of the serine supplies its oxygen atom to form the C-terminus of the beta chain, while the remainder of the serine residue undergoes an oxidative deamination to produce ammonia and the pyruvoyl prosthetic group on the alpha chain. During this reaction, the Ser that is part of the protease active site of the proenzyme becomes the pyruvoyl prosthetic group, which constitutes an essential element of the active site of the mature decarboxylase.

It is found in the cell membrane. It catalyses the reaction a 1,2-diacyl-sn-glycero-3-phospho-L-serine + H(+) = a 1,2-diacyl-sn-glycero-3-phosphoethanolamine + CO2. It participates in phospholipid metabolism; phosphatidylethanolamine biosynthesis; phosphatidylethanolamine from CDP-diacylglycerol: step 2/2. In terms of biological role, catalyzes the formation of phosphatidylethanolamine (PtdEtn) from phosphatidylserine (PtdSer). This is Phosphatidylserine decarboxylase proenzyme from Marinobacter nauticus (strain ATCC 700491 / DSM 11845 / VT8) (Marinobacter aquaeolei).